Consider the following 303-residue polypeptide: Zinc transporter ZIP9-B (303 aa).

A helical membrane pass occupies residues 7 to 27; the sequence is ISLLSLAMLVGCYVSGIIPLA. An N-linked (GlcNAc...) asparagine glycan is attached at Asn-29. 5 consecutive transmembrane segments (helical) span residues 35 to 55, 102 to 122, 142 to 162, 172 to 192, and 206 to 226; these read LKLV…AVIV, AYIG…DQIG, ITTT…LGAA, LIVF…LVSF, and HLLV…LGLS. N-linked (GlcNAc...) asparagine glycosylation is present at Asn-237. 2 consecutive transmembrane segments (helical) span residues 240–260 and 282–302; these read GVAM…HVLP and LEVC…IGHQ.

The protein belongs to the ZIP transporter (TC 2.A.5) family.

It localises to the golgi apparatus. It is found in the trans-Golgi network membrane. The protein resides in the cell membrane. Its subcellular location is the cytoplasm. The protein localises to the perinuclear region. It localises to the mitochondrion. It is found in the nucleus. It carries out the reaction Zn(2+)(in) = Zn(2+)(out). Its function is as follows. Transports zinc ions across cell and organelle membranes into the cytoplasm and regulates intracellular zinc homeostasis. Participates in the zinc ions efflux out of the secretory compartments. Regulates intracellular zinc level, resulting in the enhancement of AKT1 and MAPK3/MAPK1 (Erk1/2) phosphorylation in response to the BCR activation. Also functions as a membrane androgen receptor that mediates, through a G protein, the non-classical androgen signaling pathway, characterized by the activation of MAPK3/MAPK1 (Erk1/2) and transcription factors CREB1 or ATF1. Moreover, has dual functions as a membrane-bound androgen receptor and as an androgen-dependent zinc transporter both of which are mediated through an inhibitory G protein (Gi) that mediates both MAP kinase and zinc signaling leading to the androgen-dependent apoptotic process. This Xenopus laevis (African clawed frog) protein is Zinc transporter ZIP9-B (slc39a9-b).